A 193-amino-acid polypeptide reads, in one-letter code: dTTP/UTP pyrophosphatase (193 aa).

Residue Asp-70 is the Proton acceptor of the active site.

It belongs to the Maf family. YhdE subfamily. A divalent metal cation is required as a cofactor.

The protein resides in the cytoplasm. The catalysed reaction is dTTP + H2O = dTMP + diphosphate + H(+). It catalyses the reaction UTP + H2O = UMP + diphosphate + H(+). Its function is as follows. Nucleoside triphosphate pyrophosphatase that hydrolyzes dTTP and UTP. May have a dual role in cell division arrest and in preventing the incorporation of modified nucleotides into cellular nucleic acids. The protein is dTTP/UTP pyrophosphatase of Alcanivorax borkumensis (strain ATCC 700651 / DSM 11573 / NCIMB 13689 / SK2).